We begin with the raw amino-acid sequence, 123 residues long: DPEP2 neighbor protein (123 aa).

The segment at Ala67 to Gly123 is disordered. Positions Lys105–Thr117 are enriched in basic residues.

This chain is DPEP2 neighbor protein, found in Homo sapiens (Human).